A 98-amino-acid polypeptide reads, in one-letter code: NADH-ubiquinone oxidoreductase chain 4L (98 aa).

The next 3 membrane-spanning stretches (helical) occupy residues 1–21 (MSMV…GMLV), 29–49 (SLLC…VTIL), and 61–81 (IVLL…LVMV).

It belongs to the complex I subunit 4L family. Core subunit of respiratory chain NADH dehydrogenase (Complex I) which is composed of 45 different subunits.

It localises to the mitochondrion inner membrane. The enzyme catalyses a ubiquinone + NADH + 5 H(+)(in) = a ubiquinol + NAD(+) + 4 H(+)(out). Core subunit of the mitochondrial membrane respiratory chain NADH dehydrogenase (Complex I) which catalyzes electron transfer from NADH through the respiratory chain, using ubiquinone as an electron acceptor. Part of the enzyme membrane arm which is embedded in the lipid bilayer and involved in proton translocation. This chain is NADH-ubiquinone oxidoreductase chain 4L (MT-ND4L), found in Vulpes vulpes (Red fox).